A 209-amino-acid chain; its full sequence is uncharacterized protein (209 aa).

The protein resides in the plastid. It is found in the chloroplast. This is an uncharacterized protein from Porphyra purpurea (Red seaweed).